Consider the following 597-residue polypeptide: Elongation factor 4 (597 aa).

The region spanning 2–184 (DHIRNFSIIA…ALIAKVPPPK (183 aa)) is the tr-type G domain. Residues 14-19 (DHGKST) and 131-134 (NKID) each bind GTP.

It belongs to the TRAFAC class translation factor GTPase superfamily. Classic translation factor GTPase family. LepA subfamily.

Its subcellular location is the cell inner membrane. The catalysed reaction is GTP + H2O = GDP + phosphate + H(+). In terms of biological role, required for accurate and efficient protein synthesis under certain stress conditions. May act as a fidelity factor of the translation reaction, by catalyzing a one-codon backward translocation of tRNAs on improperly translocated ribosomes. Back-translocation proceeds from a post-translocation (POST) complex to a pre-translocation (PRE) complex, thus giving elongation factor G a second chance to translocate the tRNAs correctly. Binds to ribosomes in a GTP-dependent manner. This is Elongation factor 4 from Burkholderia multivorans (strain ATCC 17616 / 249).